We begin with the raw amino-acid sequence, 261 residues long: Cytochrome c oxidase subunit 3 (261 aa).

At 1–15 (MTHQTHAYHMVNPSP) the chain is on the mitochondrial matrix side. A helical transmembrane segment spans residues 16-34 (WPLTGALSALLMTSGLVMW). Residues 35 to 40 (FHYNST) lie on the Mitochondrial intermembrane side of the membrane. The helical transmembrane segment at 41–66 (LLLTLGLTTNLLTMYQWWRDIIREST) threads the bilayer. Residues 67–72 (FQGHHT) are Mitochondrial matrix-facing. Residues 73–105 (PAVQKGLRYGMILFIISEVFFFSGFFWAFYHSS) form a helical membrane-spanning segment. Topologically, residues 106–128 (LAPTPELGGCWPPTGIHPLNPME) are mitochondrial intermembrane. The helical transmembrane segment at 129 to 152 (VPLLNTSVLLASGVSITWAHHSLM) threads the bilayer. Residues 153-155 (EGN) are Mitochondrial matrix-facing. Residues 156 to 183 (RKHMLQALFITISLGIYFTLLQASEYYE) form a helical membrane-spanning segment. Topologically, residues 184-190 (APFTISD) are mitochondrial intermembrane. The helical transmembrane segment at 191-223 (GVYGSTFFVATGFHGLHVIIGSTFLIVCFLRQL) threads the bilayer. Topologically, residues 224-232 (KFHFTSNHH) are mitochondrial matrix. A helical membrane pass occupies residues 233–256 (FGFEAAAWYWHFVDVVWLFLYVSI). At 257-261 (YWWGS) the chain is on the mitochondrial intermembrane side.

It belongs to the cytochrome c oxidase subunit 3 family. Component of the cytochrome c oxidase (complex IV, CIV), a multisubunit enzyme composed of 14 subunits. The complex is composed of a catalytic core of 3 subunits MT-CO1, MT-CO2 and MT-CO3, encoded in the mitochondrial DNA, and 11 supernumerary subunits COX4I, COX5A, COX5B, COX6A, COX6B, COX6C, COX7A, COX7B, COX7C, COX8 and NDUFA4, which are encoded in the nuclear genome. The complex exists as a monomer or a dimer and forms supercomplexes (SCs) in the inner mitochondrial membrane with NADH-ubiquinone oxidoreductase (complex I, CI) and ubiquinol-cytochrome c oxidoreductase (cytochrome b-c1 complex, complex III, CIII), resulting in different assemblies (supercomplex SCI(1)III(2)IV(1) and megacomplex MCI(2)III(2)IV(2)).

The protein localises to the mitochondrion inner membrane. The enzyme catalyses 4 Fe(II)-[cytochrome c] + O2 + 8 H(+)(in) = 4 Fe(III)-[cytochrome c] + 2 H2O + 4 H(+)(out). Its function is as follows. Component of the cytochrome c oxidase, the last enzyme in the mitochondrial electron transport chain which drives oxidative phosphorylation. The respiratory chain contains 3 multisubunit complexes succinate dehydrogenase (complex II, CII), ubiquinol-cytochrome c oxidoreductase (cytochrome b-c1 complex, complex III, CIII) and cytochrome c oxidase (complex IV, CIV), that cooperate to transfer electrons derived from NADH and succinate to molecular oxygen, creating an electrochemical gradient over the inner membrane that drives transmembrane transport and the ATP synthase. Cytochrome c oxidase is the component of the respiratory chain that catalyzes the reduction of oxygen to water. Electrons originating from reduced cytochrome c in the intermembrane space (IMS) are transferred via the dinuclear copper A center (CU(A)) of subunit 2 and heme A of subunit 1 to the active site in subunit 1, a binuclear center (BNC) formed by heme A3 and copper B (CU(B)). The BNC reduces molecular oxygen to 2 water molecules using 4 electrons from cytochrome c in the IMS and 4 protons from the mitochondrial matrix. The protein is Cytochrome c oxidase subunit 3 (MT-CO3) of Rhinoceros unicornis (Greater Indian rhinoceros).